A 527-amino-acid chain; its full sequence is Heat shock factor protein HSF8 (527 aa).

The DNA-binding element occupies 39–133 (PFLVKTYDMV…KSISRRKPAH (95 aa)). Disordered stretches follow at residues 128 to 158 (RRKP…HSAS), 241 to 273 (NESN…ADGQ), and 297 to 341 (SSPR…TSGK). The span at 134–152 (GHAQQQQQPHGNAQQQMQP) shows a compositional bias: low complexity. Residues 317–326 (SPQSNASSGR) are compositionally biased toward polar residues.

Belongs to the HSF family. As to quaternary structure, homotrimer. Exhibits temperature-dependent phosphorylation.

The protein localises to the nucleus. DNA-binding protein that specifically binds heat shock promoter elements (HSE) and activates transcription. This is Heat shock factor protein HSF8 (HSF8) from Solanum lycopersicum (Tomato).